Here is a 199-residue protein sequence, read N- to C-terminus: Transgelin-3 (199 aa).

Residues 24–136 enclose the Calponin-homology (CH) domain; that stretch reads ADLENKLVDW…RTLMALGSVA (113 aa). A Phosphoserine modification is found at Ser163. The stretch at 174 to 199 is one Calponin-like repeat; it reads IGLQMGSNKGASQAGMTGYGMPRQIM. The span at 176–188 shows a compositional bias: polar residues; it reads LQMGSNKGASQAG. The segment at 176 to 199 is disordered; the sequence is LQMGSNKGASQAGMTGYGMPRQIM.

This sequence belongs to the calponin family.

This chain is Transgelin-3 (TAGLN3), found in Pongo abelii (Sumatran orangutan).